We begin with the raw amino-acid sequence, 145 residues long: Ubiquitin-conjugating enzyme E2 variant 1C (145 aa).

In terms of domain architecture, UBC core spans P12–F145.

Belongs to the ubiquitin-conjugating enzyme family. Heterodimer with UBC35 or UBC36. In terms of tissue distribution, expressed in roots, shoots, leaves, stems and flowers, but not in pollen.

Functionally, has no ubiquitin ligase activity on its own. The heterodimer with UBC catalyzes the synthesis of non-canonical poly-ubiquitin chains that are linked through 'Lys-63'. This type of poly-ubiquitination does not lead to protein degradation by the proteasome. Mediates transcriptional activation of target genes. May play a role in the control of progress through the cell cycle and differentiation. May play a role in the error-free DNA repair pathway and contributes to the survival of cells after DNA damage. The chain is Ubiquitin-conjugating enzyme E2 variant 1C (UEV1C) from Arabidopsis thaliana (Mouse-ear cress).